The chain runs to 141 residues: Short-chain diamines transporter (141 aa).

Transmembrane regions (helical) follow at residues 16–36 (VILLVIIAIALSFIFDVPLEV), 39–59 (TLGIVMAVTSVFWNMIFNHFF), 76–96 (ILHAIGFEGGLMLVTIPMVAY), and 103–123 (WQAIVLDFGLTMCILVYTFIF).

Belongs to the proteobacterial antimicrobial compound efflux (PACE) (TC 2.A.117) family.

The protein localises to the cell inner membrane. Its function is as follows. Mediates the efflux of short-chain diamines when energized by an electrochemical gradient. Involved in resistance to the synthetic biocide chlorhexidine, a widely used antiseptic and disinfectant in both hospital and community settings. Interacts directly with chlorhexidine and mediates its efflux via an energy-dependent mechanism. This chain is Short-chain diamines transporter, found in Acinetobacter baylyi (strain ATCC 33305 / BD413 / ADP1).